We begin with the raw amino-acid sequence, 284 residues long: Efem/EfeO family lipoprotein (284 aa).

The N-terminal stretch at 1–17 (MKKLTTLLLASTLLIAA) is a signal peptide. Cys18 carries the N-palmitoyl cysteine lipid modification. Cys18 carries S-diacylglycerol cysteine lipidation.

This sequence belongs to the EfeM/EfeO family.

It localises to the cell membrane. The chain is Efem/EfeO family lipoprotein from Staphylococcus aureus (strain MRSA252).